The primary structure comprises 137 residues: Large ribosomal subunit protein uL16 (137 aa).

This sequence belongs to the universal ribosomal protein uL16 family. In terms of assembly, part of the 50S ribosomal subunit.

Functionally, binds 23S rRNA and is also seen to make contacts with the A and possibly P site tRNAs. In Rhodopseudomonas palustris (strain BisB5), this protein is Large ribosomal subunit protein uL16.